A 168-amino-acid polypeptide reads, in one-letter code: Ribosome maturation factor RimM (168 aa).

A PRC barrel domain is found at glutamate 93–isoleucine 167.

This sequence belongs to the RimM family. Binds ribosomal protein uS19.

The protein resides in the cytoplasm. Its function is as follows. An accessory protein needed during the final step in the assembly of 30S ribosomal subunit, possibly for assembly of the head region. Essential for efficient processing of 16S rRNA. May be needed both before and after RbfA during the maturation of 16S rRNA. It has affinity for free ribosomal 30S subunits but not for 70S ribosomes. The sequence is that of Ribosome maturation factor RimM from Wolbachia sp. subsp. Brugia malayi (strain TRS).